A 240-amino-acid chain; its full sequence is Orotidine 5'-phosphate decarboxylase (240 aa).

Substrate is bound by residues aspartate 15, lysine 37, 64–73 (DLKYHDIPNT), threonine 125, arginine 186, glutamine 195, glycine 215, and arginine 216. Residue lysine 66 is the Proton donor of the active site.

Belongs to the OMP decarboxylase family. Type 1 subfamily. In terms of assembly, homodimer.

It catalyses the reaction orotidine 5'-phosphate + H(+) = UMP + CO2. Its pathway is pyrimidine metabolism; UMP biosynthesis via de novo pathway; UMP from orotate: step 2/2. Catalyzes the decarboxylation of orotidine 5'-monophosphate (OMP) to uridine 5'-monophosphate (UMP). The polypeptide is Orotidine 5'-phosphate decarboxylase (Pelobacter propionicus (strain DSM 2379 / NBRC 103807 / OttBd1)).